Reading from the N-terminus, the 62-residue chain is Synergistic-type venom protein C8S2, chain 2 (62 aa).

3 disulfide bridges follow: cysteine 3–cysteine 24, cysteine 17–cysteine 42, and cysteine 46–cysteine 57.

This sequence belongs to the three-finger toxin family. Short-chain subfamily. Aminergic toxin sub-subfamily. Heterodimer of C8S2 chain 1 (AC P01410) and chain 2; disulfide-linked. In terms of tissue distribution, expressed by the venom gland.

It is found in the secreted. This protein shows a synergetic toxic effect in that it enhances the toxicity of other toxins. The sequence is that of Synergistic-type venom protein C8S2, chain 2 from Dendroaspis angusticeps (Eastern green mamba).